A 144-amino-acid polypeptide reads, in one-letter code: Transcription antitermination protein NusB (144 aa).

It belongs to the NusB family.

Its function is as follows. Involved in transcription antitermination. Required for transcription of ribosomal RNA (rRNA) genes. Binds specifically to the boxA antiterminator sequence of the ribosomal RNA (rrn) operons. This Histophilus somni (strain 129Pt) (Haemophilus somnus) protein is Transcription antitermination protein NusB.